A 347-amino-acid chain; its full sequence is NADH-quinone oxidoreductase subunit H (347 aa).

8 helical membrane passes run 21–41 (VAGILLIALPLMLAVAMIIYA), 87–107 (GLFLIAPIITFTVALLAWAVI), 118–138 (INVGLLYILAISSLGVYGVIL), 157–177 (AQMISYEVSIGFILIGVVLFA), 195–215 (GIVNAFGFNLLLFPLAVMFLI), 258–278 (NVLLMCTLNAVLFWGGWLPPI), 283–303 (LYAVPGIIWLFAKILFFFFVF), and 323–343 (WKIFLPISLIWIFLISGYLML).

It belongs to the complex I subunit 1 family. In terms of assembly, NDH-1 is composed of 14 different subunits. Subunits NuoA, H, J, K, L, M, N constitute the membrane sector of the complex.

The protein resides in the cell inner membrane. The enzyme catalyses a quinone + NADH + 5 H(+)(in) = a quinol + NAD(+) + 4 H(+)(out). Functionally, NDH-1 shuttles electrons from NADH, via FMN and iron-sulfur (Fe-S) centers, to quinones in the respiratory chain. The immediate electron acceptor for the enzyme in this species is believed to be ubiquinone. Couples the redox reaction to proton translocation (for every two electrons transferred, four hydrogen ions are translocated across the cytoplasmic membrane), and thus conserves the redox energy in a proton gradient. This subunit may bind ubiquinone. The polypeptide is NADH-quinone oxidoreductase subunit H (Sphingopyxis alaskensis (strain DSM 13593 / LMG 18877 / RB2256) (Sphingomonas alaskensis)).